The sequence spans 193 residues: Flagellar transcriptional regulator FlhC (193 aa).

C138, C141, C158, and C161 together coordinate Zn(2+).

This sequence belongs to the FlhC family. Heterohexamer composed of two FlhC and four FlhD subunits. Each FlhC binds a FlhD dimer, forming a heterotrimer, and a hexamer assembles by dimerization of two heterotrimers. Zn(2+) is required as a cofactor.

Its subcellular location is the cytoplasm. In terms of biological role, functions in complex with FlhD as a master transcriptional regulator that regulates transcription of several flagellar and non-flagellar operons by binding to their promoter region. Activates expression of class 2 flagellar genes, including fliA, which is a flagellum-specific sigma factor that turns on the class 3 genes. Also regulates genes whose products function in a variety of physiological pathways. In Proteus mirabilis, this protein is Flagellar transcriptional regulator FlhC.